Reading from the N-terminus, the 149-residue chain is Large ribosomal subunit protein uL15A (149 aa).

The tract at residues 21–40 (RIGKHRKQRGGRGNAGGQHH) is disordered.

This sequence belongs to the universal ribosomal protein uL15 family. As to quaternary structure, component of the large ribosomal subunit.

The protein resides in the cytoplasm. It localises to the cytosol. It is found in the endoplasmic reticulum. Its function is as follows. Component of the large ribosomal subunit. The ribosome is a large ribonucleoprotein complex responsible for the synthesis of proteins in the cell. The chain is Large ribosomal subunit protein uL15A (rpl27a-1) from Entamoeba histolytica (strain ATCC 30459 / HM-1:IMSS / ABRM).